The sequence spans 476 residues: Probable coniferyl aldehyde dehydrogenase (476 aa).

Residues Glu225 and Cys259 contribute to the active site.

Belongs to the aldehyde dehydrogenase family. In terms of assembly, homodimer.

It catalyses the reaction (E)-coniferaldehyde + NADP(+) + H2O = (E)-ferulate + NADPH + 2 H(+). The catalysed reaction is (E)-coniferaldehyde + NAD(+) + H2O = (E)-ferulate + NADH + 2 H(+). In Pseudomonas aeruginosa (strain ATCC 15692 / DSM 22644 / CIP 104116 / JCM 14847 / LMG 12228 / 1C / PRS 101 / PAO1), this protein is Probable coniferyl aldehyde dehydrogenase (calB).